The sequence spans 240 residues: Zinc import ATP-binding protein ZnuC (240 aa).

Positions 1–219 (MSLLSIAALD…PAYRAMFGLD (219 aa)) constitute an ABC transporter domain. 36–43 (GPNGSGKT) lines the ATP pocket.

This sequence belongs to the ABC transporter superfamily. Zinc importer (TC 3.A.1.15.5) family. In terms of assembly, the complex is composed of two ATP-binding proteins (ZnuC), two transmembrane proteins (ZnuB) and a solute-binding protein (ZnuA).

It is found in the cell inner membrane. It carries out the reaction Zn(2+)(out) + ATP(in) + H2O(in) = Zn(2+)(in) + ADP(in) + phosphate(in) + H(+)(in). Functionally, part of the ABC transporter complex ZnuABC involved in zinc import. Responsible for energy coupling to the transport system. The polypeptide is Zinc import ATP-binding protein ZnuC (Chromohalobacter salexigens (strain ATCC BAA-138 / DSM 3043 / CIP 106854 / NCIMB 13768 / 1H11)).